A 690-amino-acid chain; its full sequence is Exonuclease GOR (690 aa).

Disordered regions lie at residues 136 to 162 (TRVA…NRSG) and 567 to 690 (QPRH…SLHH). Residues 585 to 595 (APSTTAISPES) show a composition bias toward polar residues. Positions 605–614 (KETGAVDGRR) are enriched in basic and acidic residues. The interval 612-626 (GRRGQKAKSNPNRPL) is GOR14-1 epitope. Over residues 631 to 646 (NPCRGPSGLSPSLCPS) the composition is skewed to low complexity. Over residues 661–682 (PPLPVPRVPAAPPRACPHPSAH) the composition is skewed to pro residues.

This sequence belongs to the REXO1/REXO3 family.

The protein resides in the cytoplasm. The protein localises to the nucleus. This Pan troglodytes (Chimpanzee) protein is Exonuclease GOR (REXO1L1).